The chain runs to 113 residues: MNTVRVTFLLVFVLAVSLGQADKDENRMEMQEKTEQGKSYLDFAENLLLQKLEELEAKLLEEDSKESRNSRQKRCIGEGVPCDENDPRCCSGLVCLKPTLHGIWYKSYYCYRK.

A signal peptide spans 1 to 21 (MNTVRVTFLLVFVLAVSLGQA). Residues 22–74 (DKDENRMEMQEKTEQGKSYLDFAENLLLQKLEELEAKLLEEDSKESRNSRQKR) constitute a propeptide that is removed on maturation. The disordered stretch occupies residues 61–82 (EEDSKESRNSRQKRCIGEGVPC). 3 disulfide bridges follow: C75–C90, C82–C95, and C89–C110.

This sequence belongs to the neurotoxin 14 (magi-1) family. 01 (HNTX-16) subfamily. As to expression, expressed by the venom gland.

It is found in the secreted. Functionally, probable ion channel inhibitor. The chain is U11-theraphotoxin-Hhn1f from Cyriopagopus hainanus (Chinese bird spider).